The following is a 158-amino-acid chain: Ethylene-responsive transcription factor ERF120 (158 aa).

Positions 86-147 form a DNA-binding region, AP2/ERF; the sequence is KHKGVRKKPS…SARRGTKNGE (62 aa). Residues 134–158 are disordered; it reads VGRRSARRGTKNGEEASTKKTTEKN. Positions 144–158 are enriched in basic and acidic residues; sequence KNGEEASTKKTTEKN.

This sequence belongs to the AP2/ERF transcription factor family. ERF subfamily.

The protein localises to the nucleus. In terms of biological role, probably acts as a transcriptional activator. Binds to the GCC-box pathogenesis-related promoter element. May be involved in the regulation of gene expression by stress factors and by components of stress signal transduction pathways. This chain is Ethylene-responsive transcription factor ERF120 (ERF120), found in Arabidopsis thaliana (Mouse-ear cress).